Consider the following 190-residue polypeptide: Threonylcarbamoyl-AMP synthase (190 aa).

The YrdC-like domain maps to 8–190 (RFRIRQCAAR…DAESGAVIRA (183 aa)).

The protein belongs to the SUA5 family. TsaC subfamily.

The protein resides in the cytoplasm. It catalyses the reaction L-threonine + hydrogencarbonate + ATP = L-threonylcarbamoyladenylate + diphosphate + H2O. Its function is as follows. Required for the formation of a threonylcarbamoyl group on adenosine at position 37 (t(6)A37) in tRNAs that read codons beginning with adenine. Catalyzes the conversion of L-threonine, HCO(3)(-)/CO(2) and ATP to give threonylcarbamoyl-AMP (TC-AMP) as the acyladenylate intermediate, with the release of diphosphate. The chain is Threonylcarbamoyl-AMP synthase from Alkalilimnicola ehrlichii (strain ATCC BAA-1101 / DSM 17681 / MLHE-1).